Consider the following 315-residue polypeptide: Neuroguidin (315 aa).

Residue A2 is modified to N-acetylalanine. Residues 13 to 41 (SAVTLLKNLQEQVMAVTAQVKSLTQKVQA) adopt a coiled-coil conformation. The necessary for interaction with EIF4E stretch occupies residues 41–174 (AGAYPTEKGL…KGVSKKYVPP (134 aa)). Phosphoserine is present on residues S121, S142, and S143. The tract at residues 124-169 (ENDPLRFKPHPSNMMSKLSSEDEEEDEAEDDQSEASGKKSVKGVSK) is disordered. Over residues 144-156 (EDEEEDEAEDDQS) the composition is skewed to acidic residues. The stretch at 181-205 (YDETEAEREKKRLERAKRRALSSSV) forms a coiled coil. Phosphoserine occurs at positions 204 and 214. A disordered region spans residues 277–315 (DISALTGGTVHLDEDQNPIKKRKKIPQKGRKKKGFRRRR). The segment covering 295–315 (IKKRKKIPQKGRKKKGFRRRR) has biased composition (basic residues).

This sequence belongs to the SAS10 family. In terms of assembly, part of the small subunit (SSU) processome, composed of more than 70 proteins and the RNA chaperone small nucleolar RNA (snoRNA) U3. Interacts with CPEB1 and EIF4E.

The protein localises to the nucleus. It localises to the nucleolus. Its subcellular location is the chromosome. It is found in the centromere. The protein resides in the cytoplasm. The protein localises to the cell projection. It localises to the axon. Its subcellular location is the dendrite. It is found in the filopodium. Part of the small subunit (SSU) processome, first precursor of the small eukaryotic ribosomal subunit. During the assembly of the SSU processome in the nucleolus, many ribosome biogenesis factors, an RNA chaperone and ribosomal proteins associate with the nascent pre-rRNA and work in concert to generate RNA folding, modifications, rearrangements and cleavage as well as targeted degradation of pre-ribosomal RNA by the RNA exosome. Its dissociation from the complex determines the transition from state pre-A1 to state pre-A1*. Inhibits mRNA translation in a cytoplasmic polyadenylation element (CPE)-dependent manner. The polypeptide is Neuroguidin (Homo sapiens (Human)).